The sequence spans 235 residues: Large ribosomal subunit protein uL1 (235 aa).

It belongs to the universal ribosomal protein uL1 family. As to quaternary structure, part of the 50S ribosomal subunit.

Its function is as follows. Binds directly to 23S rRNA. The L1 stalk is quite mobile in the ribosome, and is involved in E site tRNA release. Functionally, protein L1 is also a translational repressor protein, it controls the translation of the L11 operon by binding to its mRNA. This Nitratidesulfovibrio vulgaris (strain DSM 19637 / Miyazaki F) (Desulfovibrio vulgaris) protein is Large ribosomal subunit protein uL1.